The sequence spans 61 residues: Small ribosomal subunit protein uS14 (61 aa).

Zn(2+) contacts are provided by cysteine 24, cysteine 27, cysteine 40, and cysteine 43.

The protein belongs to the universal ribosomal protein uS14 family. Zinc-binding uS14 subfamily. Part of the 30S ribosomal subunit. Contacts proteins S3 and S10. The cofactor is Zn(2+).

Its function is as follows. Binds 16S rRNA, required for the assembly of 30S particles and may also be responsible for determining the conformation of the 16S rRNA at the A site. This Macrococcus caseolyticus (strain JCSC5402) (Macrococcoides caseolyticum) protein is Small ribosomal subunit protein uS14.